Reading from the N-terminus, the 381-residue chain is MAKRDYYEVLGCDRGADETVLKASFRKLAMKWHPDKNPGDPEAEIRFKEISEAYEVLKDPQKRGAYDRYGHAAFENGGGPGGAGFNADFASTFADIFDDLFGGSMGRSGARSAGGRARGADLRYNMDITLEEAFSGKTAQISIPTSISCEVCSGSGAKAGTQPKTCRTCNGAGKIRHAQGFFTLERTCPSCQGRGTVIEDPCPNCGGAGRVTRERTLQVQIPAGVEDGTRIRLGGEGEAGVRGGPPGDLYIFLSIEPHTFFQREGADLYCRAPISMVTAALGGTVEVPTIGGEKTKVKIPEGTQSGKRLRLPGAGMPVLRSRSFGDMYVQVVVETPQNLTKRQKELLAEFEGLSSTDTHPESNGFFAKMKDFFQGASSDND.

One can recognise a J domain in the interval 5–70 (DYYEVLGCDR…QKRGAYDRYG (66 aa)). The CR-type zinc finger occupies 136 to 214 (GKTAQISIPT…CGGAGRVTRE (79 aa)). Zn(2+) is bound by residues C149, C152, C166, C169, C188, C191, C202, and C205. 4 CXXCXGXG motif repeats span residues 149–156 (CEVCSGSG), 166–173 (CRTCNGAG), 188–195 (CPSCQGRG), and 202–209 (CPNCGGAG).

The protein belongs to the DnaJ family. In terms of assembly, homodimer. It depends on Zn(2+) as a cofactor.

It localises to the cytoplasm. Its function is as follows. Participates actively in the response to hyperosmotic and heat shock by preventing the aggregation of stress-denatured proteins and by disaggregating proteins, also in an autonomous, DnaK-independent fashion. Unfolded proteins bind initially to DnaJ; upon interaction with the DnaJ-bound protein, DnaK hydrolyzes its bound ATP, resulting in the formation of a stable complex. GrpE releases ADP from DnaK; ATP binding to DnaK triggers the release of the substrate protein, thus completing the reaction cycle. Several rounds of ATP-dependent interactions between DnaJ, DnaK and GrpE are required for fully efficient folding. Also involved, together with DnaK and GrpE, in the DNA replication of plasmids through activation of initiation proteins. This chain is Chaperone protein DnaJ, found in Azorhizobium caulinodans (strain ATCC 43989 / DSM 5975 / JCM 20966 / LMG 6465 / NBRC 14845 / NCIMB 13405 / ORS 571).